A 540-amino-acid polypeptide reads, in one-letter code: NADH-ubiquinone oxidoreductase chain 4 (540 aa).

The next 14 membrane-spanning stretches (helical) occupy residues 2-22 (TIIAISIMNVVIGIAILGVIL), 35-55 (IFILGVQGILIVLSGIMLIGC), 89-109 (ISAIFIFLTIILILSCNLISI), 118-138 (QKFQIMLLLTEILIINFFAAT), 140-160 (LVQLYIVYEATLIPMVIMIGV), 172-192 (FQILIYTLIGSIFMLMSIGIL), 218-238 (LIFIGFFIGFAVKIPIAPLHL), 248-268 (PTAGSVLLAGILLKLGGYGYI), 282-302 (YFPIIGGICLISILYTGIATL), 310-330 (IVAYSSISHMNVIVLGLFSGV), 338-358 (IILMIGHGVVSGGLFLCIGVI), 376-396 (VMPIMAILFFLLVLGNIAFPI), 415-435 (IIIAFFSALSMIVTAIYSFWL), and 501-521 (VNIFEFTSISLMVIMMIIIGM).

It belongs to the complex I subunit 4 family.

The protein resides in the mitochondrion membrane. The enzyme catalyses a ubiquinone + NADH + 5 H(+)(in) = a ubiquinol + NAD(+) + 4 H(+)(out). Its function is as follows. Core subunit of the mitochondrial membrane respiratory chain NADH dehydrogenase (Complex I) that is believed to belong to the minimal assembly required for catalysis. Complex I functions in the transfer of electrons from NADH to the respiratory chain. The immediate electron acceptor for the enzyme is believed to be ubiquinone. The chain is NADH-ubiquinone oxidoreductase chain 4 (nad4) from Dictyostelium discoideum (Social amoeba).